We begin with the raw amino-acid sequence, 276 residues long: Lysosome-associated membrane glycoprotein 5 (276 aa).

Positions 1–27 (MDYRACTSALRMPVLLLLLCTFSCNLA) are cleaved as a signal peptide. The Extracellular segment spans residues 28–231 (EQEVENLSGL…PTDQRKQLEE (204 aa)). Asn33, Asn51, and Asn100 each carry an N-linked (GlcNAc...) asparagine glycan. The helical transmembrane segment at 232 to 252 (TLPLILGLTLGVAILIIVAVY) threads the bilayer. Over 253-276 (HIHHKMTANQVQIPRDRSLYKHMG) the chain is Cytoplasmic.

It belongs to the LAMP family. In terms of processing, glycosylated.

It localises to the cytoplasmic vesicle membrane. It is found in the cell membrane. Its subcellular location is the cell projection. The protein resides in the dendrite. The protein localises to the cytoplasmic vesicle. It localises to the secretory vesicle. It is found in the synaptic vesicle membrane. Its subcellular location is the growth cone membrane. The protein resides in the early endosome membrane. The protein localises to the recycling endosome. It localises to the endoplasmic reticulum-Golgi intermediate compartment membrane. It is found in the endosome membrane. Functionally, plays a role in short-term synaptic plasticity in a subset of GABAergic neurons in the brain. This is Lysosome-associated membrane glycoprotein 5 (lamp5) from Xenopus tropicalis (Western clawed frog).